The chain runs to 253 residues: Ribonuclease HII (253 aa).

Residues 30–221 enclose the RNase H type-2 domain; that stretch reads GPVAGVDEVG…VRRLVVDGEP (192 aa). A divalent metal cation-binding residues include D36, E37, and D130.

The protein belongs to the RNase HII family. It depends on Mn(2+) as a cofactor. The cofactor is Mg(2+).

It is found in the cytoplasm. It carries out the reaction Endonucleolytic cleavage to 5'-phosphomonoester.. Its function is as follows. Endonuclease that specifically degrades the RNA of RNA-DNA hybrids. In Mycolicibacterium gilvum (strain PYR-GCK) (Mycobacterium gilvum (strain PYR-GCK)), this protein is Ribonuclease HII.